We begin with the raw amino-acid sequence, 514 residues long: Proline--tRNA ligase (514 aa).

This sequence belongs to the class-II aminoacyl-tRNA synthetase family. ProS type 3 subfamily. In terms of assembly, homodimer.

It is found in the cytoplasm. It catalyses the reaction tRNA(Pro) + L-proline + ATP = L-prolyl-tRNA(Pro) + AMP + diphosphate. In terms of biological role, catalyzes the attachment of proline to tRNA(Pro) in a two-step reaction: proline is first activated by ATP to form Pro-AMP and then transferred to the acceptor end of tRNA(Pro). In Erythrobacter litoralis (strain HTCC2594), this protein is Proline--tRNA ligase.